Here is a 499-residue protein sequence, read N- to C-terminus: Glycerol kinase (499 aa).

ADP is bound at residue Thr13. ATP contacts are provided by Thr13, Thr14, and Ser15. Thr13 contacts sn-glycerol 3-phosphate. Arg17 serves as a coordination point for ADP. Positions 83, 84, 135, and 245 each coordinate sn-glycerol 3-phosphate. 5 residues coordinate glycerol: Arg83, Glu84, Tyr135, Asp245, and Gln246. Residues Thr267 and Gly310 each contribute to the ADP site. Positions 267, 310, 314, and 411 each coordinate ATP. Positions 411 and 415 each coordinate ADP.

The protein belongs to the FGGY kinase family.

It catalyses the reaction glycerol + ATP = sn-glycerol 3-phosphate + ADP + H(+). The protein operates within polyol metabolism; glycerol degradation via glycerol kinase pathway; sn-glycerol 3-phosphate from glycerol: step 1/1. Its activity is regulated as follows. Inhibited by fructose 1,6-bisphosphate (FBP). Its function is as follows. Key enzyme in the regulation of glycerol uptake and metabolism. Catalyzes the phosphorylation of glycerol to yield sn-glycerol 3-phosphate. The protein is Glycerol kinase of Stenotrophomonas maltophilia (strain R551-3).